Reading from the N-terminus, the 460-residue chain is Serine/threonine-protein kinase cds1 (460 aa).

The FHA domain maps to 60–116; the sequence is WRFGRHKSCEVVLNGPRVSNFHFEIYQGHRNDSDESENVVFLHDHSSNGTFLNFERL. In terms of domain architecture, Protein kinase spans 167–433; it reads YEIIRTLGSG…ESEALQHPWF (267 aa). ATP contacts are provided by residues 173–181 and Lys196; that span reads LGSGTFAVV. Catalysis depends on Asp294, which acts as the Proton acceptor. Over residues 438–453 the composition is skewed to basic and acidic residues; sequence THEHRTPPSSSEHEAT. The interval 438-460 is disordered; sequence THEHRTPPSSSEHEATEQLNSSS. The residue at position 443 (Thr443) is a Phosphothreonine.

It belongs to the protein kinase superfamily. CAMK Ser/Thr protein kinase family. CHEK2 subfamily. As to quaternary structure, interacts with rad26. In terms of processing, autophosphorylated.

The catalysed reaction is L-seryl-[protein] + ATP = O-phospho-L-seryl-[protein] + ADP + H(+). The enzyme catalyses L-threonyl-[protein] + ATP = O-phospho-L-threonyl-[protein] + ADP + H(+). In terms of biological role, has a role in the DNA replication-monitoring S/G2 checkpoint system. It is responsible for blocking mitosis in the S phase. It monitors DNA synthesis by interacting with DNA polymerase alpha and sends a signal to block the onset of mitosis while DNA synthesis is in progress. Phosphorylates rad60 and dna2. This Schizosaccharomyces pombe (strain 972 / ATCC 24843) (Fission yeast) protein is Serine/threonine-protein kinase cds1 (cds1).